The primary structure comprises 84 residues: Large ribosomal subunit protein bL27 (84 aa).

Positions 1–22 (MAHKKAGGSTRNGRDSESKRLG) are disordered.

It belongs to the bacterial ribosomal protein bL27 family.

This is Large ribosomal subunit protein bL27 from Shewanella denitrificans (strain OS217 / ATCC BAA-1090 / DSM 15013).